A 529-amino-acid polypeptide reads, in one-letter code: Inosine-5'-monophosphate dehydrogenase (529 aa).

CBS domains follow at residues 129–185 and 189–246; these read MVTD…SKQV and MTKA…PLAT. NAD(+) is bound by residues D283 and 334-336; that span reads GVG. G336 and G338 together coordinate K(+). S339 serves as a coordination point for IMP. C341 is a K(+) binding site. The Thioimidate intermediate role is filled by C341. Residues 374–376, 397–398, and 421–425 contribute to the IMP site; these read DGG, GS, and YRGMG. R443 acts as the Proton acceptor in catalysis. E458 contacts IMP. K(+) is bound by residues E511, S512, and H513.

This sequence belongs to the IMPDH/GMPR family. Homotetramer. K(+) serves as cofactor.

It catalyses the reaction IMP + NAD(+) + H2O = XMP + NADH + H(+). Its pathway is purine metabolism; XMP biosynthesis via de novo pathway; XMP from IMP: step 1/1. With respect to regulation, mycophenolic acid (MPA) is a non-competitive inhibitor that prevents formation of the closed enzyme conformation by binding to the same site as the amobile flap. In contrast, mizoribine monophosphate (MZP) is a competitive inhibitor that induces the closed conformation. MPA is a potent inhibitor of mammalian IMPDHs but a poor inhibitor of the bacterial enzymes. MZP is a more potent inhibitor of bacterial IMPDH. In terms of biological role, catalyzes the conversion of inosine 5'-phosphate (IMP) to xanthosine 5'-phosphate (XMP), the first committed and rate-limiting step in the de novo synthesis of guanine nucleotides, and therefore plays an important role in the regulation of cell growth. In Mycobacterium bovis (strain ATCC BAA-935 / AF2122/97), this protein is Inosine-5'-monophosphate dehydrogenase.